The chain runs to 721 residues: Exocyst complex component 3-like protein 4 (721 aa).

Disordered regions lie at residues 1-52 and 94-135; these read MPLP…SLGM and GLTA…QAES. Residues 22-37 are compositionally biased toward polar residues; the sequence is SQTLPVTTWKSNSMKE. Ser-515 bears the Phosphoserine mark.

This sequence belongs to the SEC6 family.

In Mus musculus (Mouse), this protein is Exocyst complex component 3-like protein 4 (Exoc3l4).